The following is a 342-amino-acid chain: Glycerol-3-phosphate dehydrogenase [NAD(P)+] (342 aa).

Tryptophan 11, arginine 33, and lysine 107 together coordinate NADPH. Lysine 107, glycine 143, and serine 145 together coordinate sn-glycerol 3-phosphate. Alanine 147 is a binding site for NADPH. Lysine 198, aspartate 251, serine 261, arginine 262, and asparagine 263 together coordinate sn-glycerol 3-phosphate. The active-site Proton acceptor is lysine 198. Arginine 262 is an NADPH binding site. Positions 286 and 288 each coordinate NADPH.

It belongs to the NAD-dependent glycerol-3-phosphate dehydrogenase family.

The protein localises to the cytoplasm. It catalyses the reaction sn-glycerol 3-phosphate + NAD(+) = dihydroxyacetone phosphate + NADH + H(+). The catalysed reaction is sn-glycerol 3-phosphate + NADP(+) = dihydroxyacetone phosphate + NADPH + H(+). It participates in membrane lipid metabolism; glycerophospholipid metabolism. In terms of biological role, catalyzes the reduction of the glycolytic intermediate dihydroxyacetone phosphate (DHAP) to sn-glycerol 3-phosphate (G3P), the key precursor for phospholipid synthesis. In Paracidovorax citrulli (strain AAC00-1) (Acidovorax citrulli), this protein is Glycerol-3-phosphate dehydrogenase [NAD(P)+].